A 204-amino-acid polypeptide reads, in one-letter code: Nucleoside triphosphate pyrophosphatase (204 aa).

Aspartate 78 (proton acceptor) is an active-site residue.

It belongs to the Maf family. It depends on a divalent metal cation as a cofactor.

Its subcellular location is the cytoplasm. The catalysed reaction is a ribonucleoside 5'-triphosphate + H2O = a ribonucleoside 5'-phosphate + diphosphate + H(+). It catalyses the reaction a 2'-deoxyribonucleoside 5'-triphosphate + H2O = a 2'-deoxyribonucleoside 5'-phosphate + diphosphate + H(+). In terms of biological role, nucleoside triphosphate pyrophosphatase. May have a dual role in cell division arrest and in preventing the incorporation of modified nucleotides into cellular nucleic acids. The protein is Nucleoside triphosphate pyrophosphatase of Prochlorococcus marinus (strain MIT 9215).